The following is a 268-amino-acid chain: Tryptophan synthase alpha chain (268 aa).

Residues glutamate 49 and aspartate 60 each act as proton acceptor in the active site.

The protein belongs to the TrpA family. In terms of assembly, tetramer of two alpha and two beta chains.

It catalyses the reaction (1S,2R)-1-C-(indol-3-yl)glycerol 3-phosphate + L-serine = D-glyceraldehyde 3-phosphate + L-tryptophan + H2O. The protein operates within amino-acid biosynthesis; L-tryptophan biosynthesis; L-tryptophan from chorismate: step 5/5. Functionally, the alpha subunit is responsible for the aldol cleavage of indoleglycerol phosphate to indole and glyceraldehyde 3-phosphate. The polypeptide is Tryptophan synthase alpha chain (Pseudomonas aeruginosa (strain ATCC 15692 / DSM 22644 / CIP 104116 / JCM 14847 / LMG 12228 / 1C / PRS 101 / PAO1)).